A 553-amino-acid polypeptide reads, in one-letter code: Probable bifunctional riboflavin biosynthesis protein RIBA 2, chloroplastic (553 aa).

A chloroplast-targeting transit peptide spans 1–56 (MASISPTSSSVAALRGHPVQFVKGGAVSKEAKGSISFSPVANSNNANVKFTGLRVA). Residues 62-336 (DGAFPGDGYS…IADLIRYRRK (275 aa)) form a DHBP synthase region. The interval 70–90 (YSGNDNTVLPKSTSVRGQDYP) is disordered. Polar residues predominate over residues 72-85 (GNDNTVLPKSTSVR). D-ribulose 5-phosphate contacts are provided by residues 160-161 (RE), D165, 275-279 (RAGHT), and E299. E161 contacts Mg(2+). H278 provides a ligand contact to Mg(2+). Residues 337 to 553 (RDRLVERSSV…TGSNGAKGEH (217 aa)) are GTP cyclohydrolase II. 387-391 (RVHSE) serves as a coordination point for GTP. Residues C392, C403, and C405 each coordinate Zn(2+). Residues Q408, 431–433 (EGR), and T453 each bind GTP. The Proton acceptor; for GTP cyclohydrolase activity role is filled by D465. R467 functions as the Nucleophile; for GTP cyclohydrolase activity in the catalytic mechanism. The GTP site is built by T488 and K493.

In the N-terminal section; belongs to the DHBP synthase family. The protein in the C-terminal section; belongs to the GTP cyclohydrolase II family. Mg(2+) serves as cofactor. Requires Mn(2+) as cofactor. The cofactor is Zn(2+).

Its subcellular location is the plastid. It localises to the chloroplast. The enzyme catalyses D-ribulose 5-phosphate = (2S)-2-hydroxy-3-oxobutyl phosphate + formate + H(+). The catalysed reaction is GTP + 4 H2O = 2,5-diamino-6-hydroxy-4-(5-phosphoribosylamino)-pyrimidine + formate + 2 phosphate + 3 H(+). Its pathway is cofactor biosynthesis; riboflavin biosynthesis; 2-hydroxy-3-oxobutyl phosphate from D-ribulose 5-phosphate: step 1/1. The protein operates within cofactor biosynthesis; riboflavin biosynthesis; 5-amino-6-(D-ribitylamino)uracil from GTP: step 1/4. Its function is as follows. Involved in riboflavin biosynthesis. Catalyzes both the conversion of D-ribulose 5-phosphate to formate and 3,4-dihydroxy-2-butanone 4-phosphate and the conversion of GTP to 2,5-diamino-6-ribosylamino-4(3H)-pyrimidinone 5'-phosphate (DARP), formate and pyrophosphate. The sequence is that of Probable bifunctional riboflavin biosynthesis protein RIBA 2, chloroplastic (RIBA2) from Oryza sativa subsp. japonica (Rice).